Here is a 202-residue protein sequence, read N- to C-terminus: uncharacterized protein (202 aa).

The Cytoplasmic portion of the chain corresponds to 1–6; the sequence is MITDFL. The helical; Signal-anchor for type II membrane protein transmembrane segment at 7–23 threads the bilayer; it reads LAFSILAVSTTLGVSNL. The Extracellular portion of the chain corresponds to 24–202; sequence NKQCRDLLQC…KNGKTRGHSG (179 aa). N53 is a glycosylation site (N-linked (GlcNAc...) asparagine).

It is found in the membrane. This is an uncharacterized protein from Caenorhabditis elegans.